A 544-amino-acid chain; its full sequence is Chaperonin GroEL (544 aa).

ATP contacts are provided by residues 30 to 33 (TLGP), Lys-51, 87 to 91 (DGTTT), Gly-415, 479 to 481 (NAA), and Asp-495.

It belongs to the chaperonin (HSP60) family. Forms a cylinder of 14 subunits composed of two heptameric rings stacked back-to-back. Interacts with the co-chaperonin GroES.

The protein localises to the cytoplasm. The catalysed reaction is ATP + H2O + a folded polypeptide = ADP + phosphate + an unfolded polypeptide.. Functionally, together with its co-chaperonin GroES, plays an essential role in assisting protein folding. The GroEL-GroES system forms a nano-cage that allows encapsulation of the non-native substrate proteins and provides a physical environment optimized to promote and accelerate protein folding. The polypeptide is Chaperonin GroEL (Francisella tularensis subsp. mediasiatica (strain FSC147)).